The chain runs to 530 residues: Phosphoenolpyruvate carboxykinase (ATP) (530 aa).

Residues Arg60, Tyr195, and Lys201 each coordinate substrate. Residues Lys201, His221, and 237–245 (GLSGTGKTT) each bind ATP. Residues Lys201 and His221 each contribute to the Mn(2+) site. Position 258 (Asp258) interacts with Mn(2+). Residues Glu286, Arg324, 443–444 (RI), and Ser449 each bind ATP. Substrate is bound at residue Arg324.

It belongs to the phosphoenolpyruvate carboxykinase (ATP) family. The cofactor is Mn(2+).

Its subcellular location is the cytoplasm. The enzyme catalyses oxaloacetate + ATP = phosphoenolpyruvate + ADP + CO2. It participates in carbohydrate biosynthesis; gluconeogenesis. Its function is as follows. Involved in the gluconeogenesis. Catalyzes the conversion of oxaloacetate (OAA) to phosphoenolpyruvate (PEP) through direct phosphoryl transfer between the nucleoside triphosphate and OAA. This chain is Phosphoenolpyruvate carboxykinase (ATP), found in Pelobacter propionicus (strain DSM 2379 / NBRC 103807 / OttBd1).